A 584-amino-acid chain; its full sequence is Cytochrome c oxidase subunit 1 (584 aa).

The interval 1 to 25 (MTAVAPRVDGHVAPQRPEPTGHARK) is disordered. The helical transmembrane segment at 43-63 (IMYIIMSFSFFFLGGLMALLI) threads the bilayer. Fe(II)-heme a is bound at residue H87. The next 6 helical transmembrane spans lie at 90–110 (VMLLLYGTPIVWGFANYVLPL), 122–142 (LNAFGFWITTVGGVAMLTGFL), 171–191 (MWIVGVGATGIGSVASAINML), 214–234 (IFVVSVLALLIFPLLLAAALG), 259–279 (LFWFFGHPEVYVLALPFFGIV), and 292–312 (FGYVGLIFATLSIGALSMAVW). Residues H265 and Y269 each contribute to the Cu cation site. A cross-link (1'-histidyl-3'-tyrosine (His-Tyr)) is located at residues 265-269 (HPEVY). Residues H314 and H315 each contribute to the Cu cation site. Helical transmembrane passes span 316–336 (MFVTGAVLLPFFSFMTFLISV) and 360–380 (MIWSVGFMATFLFGGLTGIML). H398 is a heme a3 binding site. 3 helical membrane passes run 399-419 (FHYTLFGTVVFASCAGVYFWF), 434-454 (IHFWLTFVGFHGTFLIQHWVG), and 477-497 (ISTVFSFLLGLSVIPFIWNVF). H400 contacts Fe(II)-heme a. The disordered stretch occupies residues 564-584 (HDDINAPELGTAPALASDSSR).

In terms of assembly, associates with subunits II, III and IV to form cytochrome c oxidase. The 4 subunit cytochrome c oxidase forms a supercomplex with the menaquinol-cytochrome c reductase complex (cytochrome bc1). Cu(2+) serves as cofactor. The cofactor is heme.

The protein resides in the cell membrane. The enzyme catalyses 4 Fe(II)-[cytochrome c] + O2 + 8 H(+)(in) = 4 Fe(III)-[cytochrome c] + 2 H2O + 4 H(+)(out). It participates in energy metabolism; oxidative phosphorylation. Its function is as follows. Cytochrome c oxidase is the component of the respiratory chain that catalyzes the reduction of oxygen to water. Subunits 1-3 form the functional core of the enzyme complex. CO I is the catalytic subunit of the enzyme. Electrons originating in cytochrome c are transferred via the copper A center of subunit 2 and heme A of subunit 1 to the bimetallic center formed by heme A3 and copper B. This is Cytochrome c oxidase subunit 1 (ctaD) from Corynebacterium glutamicum (strain ATCC 13032 / DSM 20300 / JCM 1318 / BCRC 11384 / CCUG 27702 / LMG 3730 / NBRC 12168 / NCIMB 10025 / NRRL B-2784 / 534).